The sequence spans 362 residues: Chorismate synthase (362 aa).

Arg47 contributes to the NADP(+) binding site. FMN contacts are provided by residues 124–126, Gly286, 301–305, and Arg327; these read RSS and KPTAT.

It belongs to the chorismate synthase family. In terms of assembly, homotetramer. Requires FMNH2 as cofactor.

It carries out the reaction 5-O-(1-carboxyvinyl)-3-phosphoshikimate = chorismate + phosphate. Its pathway is metabolic intermediate biosynthesis; chorismate biosynthesis; chorismate from D-erythrose 4-phosphate and phosphoenolpyruvate: step 7/7. Catalyzes the anti-1,4-elimination of the C-3 phosphate and the C-6 proR hydrogen from 5-enolpyruvylshikimate-3-phosphate (EPSP) to yield chorismate, which is the branch point compound that serves as the starting substrate for the three terminal pathways of aromatic amino acid biosynthesis. This reaction introduces a second double bond into the aromatic ring system. This is Chorismate synthase from Synechococcus sp. (strain ATCC 27144 / PCC 6301 / SAUG 1402/1) (Anacystis nidulans).